A 1361-amino-acid chain; its full sequence is DNA-directed RNA polymerase subunit beta (1361 aa).

Belongs to the RNA polymerase beta chain family. In terms of assembly, the RNAP catalytic core consists of 2 alpha, 1 beta, 1 beta' and 1 omega subunit. When a sigma factor is associated with the core the holoenzyme is formed, which can initiate transcription.

It catalyses the reaction RNA(n) + a ribonucleoside 5'-triphosphate = RNA(n+1) + diphosphate. In terms of biological role, DNA-dependent RNA polymerase catalyzes the transcription of DNA into RNA using the four ribonucleoside triphosphates as substrates. The chain is DNA-directed RNA polymerase subunit beta from Cellvibrio japonicus (strain Ueda107) (Pseudomonas fluorescens subsp. cellulosa).